We begin with the raw amino-acid sequence, 483 residues long: Septin-8 (483 aa).

A compositionally biased stretch (basic and acidic residues) spans 1–16 (MAATDLERFSNAEPEP). A disordered region spans residues 1 to 22 (MAATDLERFSNAEPEPRSLSLG). An N-acetylalanine modification is found at alanine 2. Serine 10 carries the post-translational modification Phosphoserine. Positions 41 to 307 (QGFSFNILCV…ELYRRCKLEE (267 aa)) constitute a Septin-type G domain. The G1 motif stretch occupies residues 51–58 (GETGIGKS). Residues 51-58 (GETGIGKS), glycine 106, 187-195 (KADTISKSE), glycine 241, and arginine 256 contribute to the GTP site. Residues 103–106 (DAVG) form a G3 motif region. The interval 186–189 (AKAD) is G4 motif. Residues 320 to 413 (FSLQETYEAK…AVEALQSQAL (94 aa)) are a coiled coil. The span at 411 to 420 (QALHATSQQP) shows a compositional bias: polar residues. The segment at 411–443 (QALHATSQQPLRKDKDKKNRSDIGAHQPGMSLS) is disordered. Positions 421–433 (LRKDKDKKNRSDI) are enriched in basic and acidic residues.

The protein belongs to the TRAFAC class TrmE-Era-EngA-EngB-Septin-like GTPase superfamily. Septin GTPase family. In terms of assembly, septins polymerize into heterooligomeric protein complexes that form filaments, and can associate with cellular membranes, actin filaments and microtubules. GTPase activity is required for filament formation. Interacts with CDK14. Interacts with SEPTIN5. Interacts with SEPTIN7. Interacts with SEPTIN4. Interacts with VAMP2; the interaction inhibits interaction of VAMP2 with SYP. Interacts with STX1A. In terms of tissue distribution, widely expressed, including in brain, heart and platelets; most abundant in aorta. Isoform 2 is expressed at low levels in specific brain areas, such as occipital pole, frontal lobe, temporal lobe and putamen. Isoform 1 and 3 are highly expressed in specific brain areas, such as occipital pole, frontal lobe, temporal lobe and putamen. Isoform 2 is highly expressed in prostate, testis and ovary. Isoform 1 and isoform 3 are expressed at low levels in prostate, testis and ovary.

It localises to the cytoplasm. The protein resides in the cytoskeleton. It is found in the synapse. Its subcellular location is the cell projection. The protein localises to the axon. It localises to the cytoplasmic vesicle. The protein resides in the secretory vesicle. It is found in the synaptic vesicle membrane. Its subcellular location is the presynapse. Filament-forming cytoskeletal GTPase. May play a role in platelet secretion. Seems to participate in the process of SNARE complex formation in synaptic vesicles. Its function is as follows. Stabilizes BACE1 protein levels and promotes the sorting and accumulation of BACE1 to the recycling or endosomal compartments, modulating the beta-amyloidogenic processing of APP. In Homo sapiens (Human), this protein is Septin-8.